The chain runs to 224 residues: Uracil-DNA glycosylase (224 aa).

Asp-61 functions as the Proton acceptor in the catalytic mechanism.

It belongs to the uracil-DNA glycosylase (UDG) superfamily. UNG family.

It localises to the cytoplasm. It carries out the reaction Hydrolyzes single-stranded DNA or mismatched double-stranded DNA and polynucleotides, releasing free uracil.. Excises uracil residues from the DNA which can arise as a result of misincorporation of dUMP residues by DNA polymerase or due to deamination of cytosine. The polypeptide is Uracil-DNA glycosylase (Mannheimia succiniciproducens (strain KCTC 0769BP / MBEL55E)).